The primary structure comprises 555 residues: MRSKKMTHGLEKAPHRSLLHALGLTREEIERPLVGVVNAANEVVPGHVHLHTIAEAVKAGVRAAGGTPMEFPAIAVCDGLAMNHEGMHFSLPSREIIADSIEIMATAHPFDALVFIPNCDKSVPGMLMAMLRMDIPSIMVSGGPMLAGGTLAGRTDLISVFEAVGRVQRGDMTMAELDEMTETACPGCGSCAGMFTANTMNCMAETMGLALPGNGTIPAVTAARVRLAKHAGMKVMELLEKNITPRSIVTPRAVANAVAVDMALGGSTNTVLHLPAVFGEAGLDLTLDIFDEVSRKTPNLCKLSPAGHHHIQDLHAAGGIPAVMAELTRKGLVDTSVMTVTGKTLAENLAELNARVLNPDVIRSADAPYSAQGGIAILKGSLAPQGAVVKQSAVAPEMMVREAVARVFDSEGEAHAAIMGGKINKGDAIIIRYEGPRGGPGMREMLSPTAAIAGMGLGADVALITDGRFSGGTRGAAIGHVSPEAADGGNIGLVREGDHILIDIPARRLDLLVDEAELAARRETFVPLEKPVTSPLLRRYARQVTSAATGAMYRK.

Asp-78 is a binding site for Mg(2+). Position 119 (Cys-119) interacts with [2Fe-2S] cluster. Mg(2+) is bound by residues Asp-120 and Lys-121. An N6-carboxylysine modification is found at Lys-121. Cys-191 is a binding site for [2Fe-2S] cluster. Glu-444 provides a ligand contact to Mg(2+). Ser-470 functions as the Proton acceptor in the catalytic mechanism.

The protein belongs to the IlvD/Edd family. Homodimer. Requires [2Fe-2S] cluster as cofactor. Mg(2+) serves as cofactor.

The enzyme catalyses (2R)-2,3-dihydroxy-3-methylbutanoate = 3-methyl-2-oxobutanoate + H2O. The catalysed reaction is (2R,3R)-2,3-dihydroxy-3-methylpentanoate = (S)-3-methyl-2-oxopentanoate + H2O. Its pathway is amino-acid biosynthesis; L-isoleucine biosynthesis; L-isoleucine from 2-oxobutanoate: step 3/4. It participates in amino-acid biosynthesis; L-valine biosynthesis; L-valine from pyruvate: step 3/4. In terms of biological role, functions in the biosynthesis of branched-chain amino acids. Catalyzes the dehydration of (2R,3R)-2,3-dihydroxy-3-methylpentanoate (2,3-dihydroxy-3-methylvalerate) into 2-oxo-3-methylpentanoate (2-oxo-3-methylvalerate) and of (2R)-2,3-dihydroxy-3-methylbutanoate (2,3-dihydroxyisovalerate) into 2-oxo-3-methylbutanoate (2-oxoisovalerate), the penultimate precursor to L-isoleucine and L-valine, respectively. This Nitratidesulfovibrio vulgaris (strain DSM 19637 / Miyazaki F) (Desulfovibrio vulgaris) protein is Dihydroxy-acid dehydratase.